Reading from the N-terminus, the 81-residue chain is Costars family protein ABRACL (81 aa).

Met-1 is modified (N-acetylmethionine).

This sequence belongs to the costars family.

The polypeptide is Costars family protein ABRACL (ABRACL) (Homo sapiens (Human)).